We begin with the raw amino-acid sequence, 292 residues long: Nucleotide-binding protein AZOSEA20610 (292 aa).

Gly-8 to Ser-15 is an ATP binding site. Asp-57–Ser-60 is a GTP binding site.

Belongs to the RapZ-like family.

In terms of biological role, displays ATPase and GTPase activities. The sequence is that of Nucleotide-binding protein AZOSEA20610 from Aromatoleum aromaticum (strain DSM 19018 / LMG 30748 / EbN1) (Azoarcus sp. (strain EbN1)).